Here is a 421-residue protein sequence, read N- to C-terminus: ATP-dependent RNA helicase RhlB (421 aa).

Positions 9 to 37 (QKFSDFALHPKVVEALEKKGFHNCTPIQA) match the Q motif motif. A Helicase ATP-binding domain is found at 40–219 (LPLTLAGRDV…FEQMNNAEYI (180 aa)). 53–60 (AQTGTGKT) provides a ligand contact to ATP. The DEAD box signature appears at 165 to 168 (DEAD). A Helicase C-terminal domain is found at 245–390 (RLLQTLIEEE…VSKYNPDALM (146 aa)). The disordered stretch occupies residues 392 to 421 (DLPKPLRLTRPRTGNGPRRTGTPRNRRRSG). Low complexity predominate over residues 402–414 (PRTGNGPRRTGTP).

The protein belongs to the DEAD box helicase family. RhlB subfamily. In terms of assembly, component of the RNA degradosome, which is a multiprotein complex involved in RNA processing and mRNA degradation.

It is found in the cytoplasm. It carries out the reaction ATP + H2O = ADP + phosphate + H(+). In terms of biological role, DEAD-box RNA helicase involved in RNA degradation. Has RNA-dependent ATPase activity and unwinds double-stranded RNA. This chain is ATP-dependent RNA helicase RhlB, found in Escherichia coli O7:K1 (strain IAI39 / ExPEC).